The following is a 201-amino-acid chain: dCTP deaminase, dUMP-forming (201 aa).

DCTP-binding positions include 101–106, Asp-119, 127–129, Gln-148, Tyr-162, and Gln-174; these read KSSLGR and TLE. The active-site Proton donor/acceptor is Glu-129.

This sequence belongs to the dCTP deaminase family. As to quaternary structure, homotrimer.

It carries out the reaction dCTP + 2 H2O = dUMP + NH4(+) + diphosphate. It functions in the pathway pyrimidine metabolism; dUMP biosynthesis; dUMP from dCTP: step 1/1. Functionally, bifunctional enzyme that catalyzes both the deamination of dCTP to dUTP and the hydrolysis of dUTP to dUMP without releasing the toxic dUTP intermediate. This chain is dCTP deaminase, dUMP-forming, found in Parafrankia sp. (strain EAN1pec).